Here is a 150-residue protein sequence, read N- to C-terminus: UPF0756 membrane protein Dd1591_2981 (150 aa).

Helical transmembrane passes span 10–32 (ILLA…AILF), 51–71 (YGLS…IASG), 88–108 (LMAV…VVLM), and 127–147 (ALFR…SLLI).

This sequence belongs to the UPF0756 family.

The protein resides in the cell membrane. This chain is UPF0756 membrane protein Dd1591_2981, found in Dickeya chrysanthemi (strain Ech1591) (Dickeya zeae (strain Ech1591)).